The sequence spans 161 residues: Large ribosomal subunit protein uL11 (161 aa).

It belongs to the universal ribosomal protein uL11 family. In terms of assembly, part of the ribosomal stalk of the 50S ribosomal subunit. Interacts with L10 and the large rRNA to form the base of the stalk. L10 forms an elongated spine to which L12 dimers bind in a sequential fashion forming a multimeric L10(L12)X complex.

Functionally, forms part of the ribosomal stalk which helps the ribosome interact with GTP-bound translation factors. This Methanosarcina acetivorans (strain ATCC 35395 / DSM 2834 / JCM 12185 / C2A) protein is Large ribosomal subunit protein uL11.